We begin with the raw amino-acid sequence, 343 residues long: Tetraacyldisaccharide 4'-kinase (343 aa).

58 to 65 (VAGGAGKT) is an ATP binding site.

The protein belongs to the LpxK family.

It catalyses the reaction a lipid A disaccharide + ATP = a lipid IVA + ADP + H(+). It functions in the pathway glycolipid biosynthesis; lipid IV(A) biosynthesis; lipid IV(A) from (3R)-3-hydroxytetradecanoyl-[acyl-carrier-protein] and UDP-N-acetyl-alpha-D-glucosamine: step 6/6. Its function is as follows. Transfers the gamma-phosphate of ATP to the 4'-position of a tetraacyldisaccharide 1-phosphate intermediate (termed DS-1-P) to form tetraacyldisaccharide 1,4'-bis-phosphate (lipid IVA). The protein is Tetraacyldisaccharide 4'-kinase of Polaromonas naphthalenivorans (strain CJ2).